We begin with the raw amino-acid sequence, 693 residues long: Golgin subfamily A member 6B (693 aa).

The segment covering 1 to 11 (MWPQPYLPPHP) has biased composition (pro residues). Disordered regions lie at residues 1–72 (MWPQ…SQYQ), 497–551 (LPGE…VERR), 629–650 (NPADEPTPGAPAPQELGAAGEQ), and 660–679 (NNVEPAPGAAREGSPHDNPT). The stretch at 77–611 (ALESSSVTIS…KLLELQELVL (535 aa)) forms a coiled coil. A compositionally biased stretch (basic and acidic residues) spans 537-551 (LPKEKADGTEQVERR).

It belongs to the GOLGA6 family.

The chain is Golgin subfamily A member 6B (GOLGA6B) from Homo sapiens (Human).